Reading from the N-terminus, the 163-residue chain is MTVTDDYLANNVDYASGFKGPLPMPPSKHIAIVACMDARLDVYRMLGIKEGEAHVIRNAGCVVTDDVIRSLAISQRLLGTREIILLHHTDCGMLTFTDDDFKRAIQDETGIRPTWSPESYPDAVEDVRQSLRRIEVNPFVTKHTSLRGFVFDVATGKLNEVTP.

Positions 35, 37, 88, and 91 each coordinate Zn(2+).

It belongs to the beta-class carbonic anhydrase family. Homotetramer. It depends on Zn(2+) as a cofactor.

It catalyses the reaction hydrogencarbonate + H(+) = CO2 + H2O. Catalyzes the reversible hydration of carbon dioxide to form bicarbonate. The sequence is that of Beta-carbonic anhydrase 1 from Mycobacterium bovis (strain ATCC BAA-935 / AF2122/97).